The sequence spans 345 residues: Dihydroorotate dehydrogenase (quinone) (345 aa).

FMN contacts are provided by residues 65 to 69 (AGLDK) and Thr89. Lys69 lines the substrate pocket. Substrate is bound at residue 114-118 (NRMGF). Positions 146 and 179 each coordinate FMN. Asn179 is a substrate binding site. Ser182 acts as the Nucleophile in catalysis. Asn184 lines the substrate pocket. FMN is bound by residues Lys224 and Thr252. 253–254 (NT) serves as a coordination point for substrate. FMN is bound by residues Gly275, Gly304, and 325–326 (YT).

It belongs to the dihydroorotate dehydrogenase family. Type 2 subfamily. As to quaternary structure, monomer. Requires FMN as cofactor.

The protein resides in the cell membrane. It carries out the reaction (S)-dihydroorotate + a quinone = orotate + a quinol. It functions in the pathway pyrimidine metabolism; UMP biosynthesis via de novo pathway; orotate from (S)-dihydroorotate (quinone route): step 1/1. Its function is as follows. Catalyzes the conversion of dihydroorotate to orotate with quinone as electron acceptor. In Janthinobacterium sp. (strain Marseille) (Minibacterium massiliensis), this protein is Dihydroorotate dehydrogenase (quinone).